Consider the following 255-residue polypeptide: Proliferating cell nuclear antigen 2 (255 aa).

A DNA-binding region spans residues 61-80; it reads HCDRNVSLGLDLKSLGKVLK.

This sequence belongs to the PCNA family. As to quaternary structure, homotrimer. Interacts with the catalytic subunits of two DNA polymerase complexes: PolD1 in the delta complex and PolE1/DNApol-epsilon255 in the epsilon complex.

It localises to the nucleus. The protein resides in the chromosome. The protein localises to the cytoplasm. Its function is as follows. Likely to be an auxiliary protein of DNA polymerase delta complex and is probably involved in the control of DNA replication and repair by increasing the polymerase's processibility. May function independently of PCNA during DNA repair. The sequence is that of Proliferating cell nuclear antigen 2 from Drosophila melanogaster (Fruit fly).